The sequence spans 385 residues: tRNA-specific 2-thiouridylase MnmA (385 aa).

Residues 8-15 (AMSGGVDS) and Leu-34 each bind ATP. The active-site Nucleophile is Cys-102. Cys-102 and Cys-200 are oxidised to a cystine. Gly-126 is an ATP binding site. An interaction with tRNA region spans residues 150–152 (KDQ). Cys-200 functions as the Cysteine persulfide intermediate in the catalytic mechanism. The segment at 307 to 308 (RY) is interaction with tRNA.

Belongs to the MnmA/TRMU family.

The protein resides in the cytoplasm. It catalyses the reaction S-sulfanyl-L-cysteinyl-[protein] + uridine(34) in tRNA + AH2 + ATP = 2-thiouridine(34) in tRNA + L-cysteinyl-[protein] + A + AMP + diphosphate + H(+). In terms of biological role, catalyzes the 2-thiolation of uridine at the wobble position (U34) of tRNA, leading to the formation of s(2)U34. The polypeptide is tRNA-specific 2-thiouridylase MnmA (Heliobacterium modesticaldum (strain ATCC 51547 / Ice1)).